The chain runs to 1093 residues: uncharacterized protein (1093 aa).

This is an uncharacterized protein from Escherichia coli (strain K12).